Here is a 255-residue protein sequence, read N- to C-terminus: Diphthine--ammonia ligase (255 aa).

Belongs to the Diphthine--ammonia ligase family.

It carries out the reaction diphthine-[translation elongation factor 2] + NH4(+) + ATP = diphthamide-[translation elongation factor 2] + AMP + diphosphate + H(+). It participates in protein modification; peptidyl-diphthamide biosynthesis. Amidase that catalyzes the last step of diphthamide biosynthesis using ammonium and ATP. Diphthamide biosynthesis consists in the conversion of an L-histidine residue in the translation elongation factor eEF-2 (EEF2) to diphthamide. The chain is Diphthine--ammonia ligase (dph6) from Danio rerio (Zebrafish).